The chain runs to 618 residues: tRNA 5-methylaminomethyl-2-thiouridine biosynthesis bifunctional protein MnmC (618 aa).

The tract at residues 1–231 is tRNA (mnm(5)s(2)U34)-methyltransferase; sequence MLQTYAPIDF…KRHMLSAVYE (231 aa). The interval 256 to 618 is FAD-dependent cmnm(5)s(2)U34 oxidoreductase; that stretch reads IGAGIAGATT…KDIIRGHLNN (363 aa).

In the N-terminal section; belongs to the methyltransferase superfamily. tRNA (mnm(5)s(2)U34)-methyltransferase family. It in the C-terminal section; belongs to the DAO family. FAD is required as a cofactor.

The protein resides in the cytoplasm. It carries out the reaction 5-aminomethyl-2-thiouridine(34) in tRNA + S-adenosyl-L-methionine = 5-methylaminomethyl-2-thiouridine(34) in tRNA + S-adenosyl-L-homocysteine + H(+). Catalyzes the last two steps in the biosynthesis of 5-methylaminomethyl-2-thiouridine (mnm(5)s(2)U) at the wobble position (U34) in tRNA. Catalyzes the FAD-dependent demodification of cmnm(5)s(2)U34 to nm(5)s(2)U34, followed by the transfer of a methyl group from S-adenosyl-L-methionine to nm(5)s(2)U34, to form mnm(5)s(2)U34. The sequence is that of tRNA 5-methylaminomethyl-2-thiouridine biosynthesis bifunctional protein MnmC from Dichelobacter nodosus (strain VCS1703A).